The following is a 244-amino-acid chain: Mediator of RNA polymerase II transcription subunit 8 (244 aa).

Residues 6–30 (QEQLKTLEQSRQRLVQLTRSLASLI) adopt a coiled-coil conformation.

This sequence belongs to the Mediator complex subunit 8 family. As to quaternary structure, component of the Mediator complex.

The protein localises to the nucleus. Component of the Mediator complex, a coactivator involved in the regulated transcription of nearly all RNA polymerase II-dependent genes. Mediator functions as a bridge to convey information from gene-specific regulatory proteins to the basal RNA polymerase II transcription machinery. Mediator is recruited to promoters by direct interactions with regulatory proteins and serves as a scaffold for the assembly of a functional preinitiation complex with RNA polymerase II and the general transcription factors. This is Mediator of RNA polymerase II transcription subunit 8 (med8) from Aspergillus oryzae (strain ATCC 42149 / RIB 40) (Yellow koji mold).